Consider the following 75-residue polypeptide: UPF0235 protein MSMEG_3845 (75 aa).

It belongs to the UPF0235 family.

The polypeptide is UPF0235 protein MSMEG_3845 (Mycolicibacterium smegmatis (strain ATCC 700084 / mc(2)155) (Mycobacterium smegmatis)).